The following is a 264-amino-acid chain: Thymidylate synthase (264 aa).

Arginine 21 is a dUMP binding site. Histidine 51 is a binding site for (6R)-5,10-methylene-5,6,7,8-tetrahydrofolate. 126-127 (RR) is a dUMP binding site. The active-site Nucleophile is cysteine 146. Residues 166-169 (RSAD), asparagine 177, and 207-209 (HIY) contribute to the dUMP site. Residue aspartate 169 participates in (6R)-5,10-methylene-5,6,7,8-tetrahydrofolate binding. Alanine 263 is a binding site for (6R)-5,10-methylene-5,6,7,8-tetrahydrofolate.

It belongs to the thymidylate synthase family. Bacterial-type ThyA subfamily. In terms of assembly, homodimer.

It localises to the cytoplasm. It carries out the reaction dUMP + (6R)-5,10-methylene-5,6,7,8-tetrahydrofolate = 7,8-dihydrofolate + dTMP. Its pathway is pyrimidine metabolism; dTTP biosynthesis. In terms of biological role, catalyzes the reductive methylation of 2'-deoxyuridine-5'-monophosphate (dUMP) to 2'-deoxythymidine-5'-monophosphate (dTMP) while utilizing 5,10-methylenetetrahydrofolate (mTHF) as the methyl donor and reductant in the reaction, yielding dihydrofolate (DHF) as a by-product. This enzymatic reaction provides an intracellular de novo source of dTMP, an essential precursor for DNA biosynthesis. This chain is Thymidylate synthase, found in Agrobacterium fabrum (strain C58 / ATCC 33970) (Agrobacterium tumefaciens (strain C58)).